Here is a 665-residue protein sequence, read N- to C-terminus: RNA polymerase II-associated protein 3 (665 aa).

T2 carries the N-acetylthreonine modification. The stretch at 8–41 (IELQLQVKQNAEELQDFMRDLENWEKDIKQKDME) is one TPR 1 repeat. The disordered stretch occupies residues 37 to 82 (QKDMELRRQNGVPEENLPPIRNGNFRKKKKGKAKESSKKTREENTK). The segment covering 69–82 (AKESSKKTREENTK) has biased composition (basic and acidic residues). 4 positions are modified to phosphoserine: S87, S116, S119, and S121. A disordered region spans residues 109-129 (DSTHESLSQESESEEDGIHVD). TPR repeat units lie at residues 133–166 (ALVLKEKGNKYFKQGKYDEAIDCYTKGMDADPYN), 168–200 (VLPTNRASAYFRLKKFAVAESDCNLAVALNRSY), 201–234 (TKAYSRRGAARFALQKLEEAKKDYERVLELEPNN), 282–315 (AISEKDRGNGFFKEGKYERAIECYTRGIAADGAN), 317–349 (LLPANRAMAYLKIQKYEEAEKDCTQAILLDGSY), and 350–383 (SKAFARRGTARTFLGKLNEAKQDFETVLLLEPGN). The residue at position 481 (S481) is a Phosphoserine. K498 is covalently cross-linked (Glycyl lysine isopeptide (Lys-Gly) (interchain with G-Cter in SUMO2)).

This sequence belongs to the RPAP3 family. Tightly associated with the RNA polymerase II complex. Component of the R2TP complex composed at least of RUVBL1, RUVBL2, RPAP3 and PIHD1. Component of the PAQosome complex which is responsible for the biogenesis of several protein complexes and which consists of R2TP complex members RUVBL1, RUVBL2, RPAP3 and PIH1D1, URI complex members PFDN2, PFDN6, PDRG1, UXT and URI1 as well as ASDURF, POLR2E and DNAAF10/WDR92. Interacts with PIH1D1. Interacts with TSC1 and TSC2. Interacts with PRPF8 and EFTUD2 in a ZNHIT2-dependent manner.

Forms an interface between the RNA polymerase II enzyme and chaperone/scaffolding protein, suggesting that it is required to connect RNA polymerase II to regulators of protein complex formation. The sequence is that of RNA polymerase II-associated protein 3 (RPAP3) from Homo sapiens (Human).